The sequence spans 99 residues: Large ribosomal subunit protein bL27 (99 aa).

Positions 1–12 (MMINNLEALKLF) are excised as a propeptide. Positions 15–36 (HKGGGSTANGRNSAGRRLGAKR) are disordered.

The protein belongs to the bacterial ribosomal protein bL27 family. Post-translationally, the N-terminus is cleaved by ribosomal processing cysteine protease Prp.

In Lactobacillus johnsonii (strain CNCM I-12250 / La1 / NCC 533), this protein is Large ribosomal subunit protein bL27.